The chain runs to 583 residues: MKELFIGNYGLEQVGQKVTAKGWVANIRNHGKLAFIELRDREGLLQVFVDSAVADFDKLHDLHKESILAVTGEIVARDERFVNPHIKSGQVELRAETIEIIASSKLLPFELDNHAHAGEDIRQKYRYLDLRREKMTANLKLRHQVTKAIRDYLNQADFIDVETPYLTKSTPEGARDFLVPSRVFKNQFYALPQSPQMLKQLLMGAGLERYYQIVRCFRDEDLRGDRQPEFTQVDLEMSFVSEEDVRNLVEGMLKAVVKASKGIELTEAFPIISYAQAMRRFGSDKPDTRFAMELKDLTELSRGNTSLFLQKGLKKENGVVMGICAKNAAKAFTNRQMATLKQLVMDFGVAGFATATIEKGQVTGSLKSTFKDHNTELLELFEAEDGDMIFFVTGSLKRVQEALGGLRVRLAKDLELIDNDKLNFLWVVDWPLLEWNEDLNRYQAMHHPFTQGAFEDGSDWKENPEKMMSRAYDIVLNGYEIGGGSLRIHKRSAQEAMFELLGMKKEDYERDFGFFLEALEYGFPPHGGLALGLDRLVMILAEEGNIREVIAFPKNGQGADAMLESPSLVADQQLAELRLALRD.

Glutamate 172 is an L-aspartate binding site. The segment at 196-199 (QMLK) is aspartate. Arginine 218 is a binding site for L-aspartate. Residues 218–220 (RDE) and glutamine 227 each bind ATP. An L-aspartate-binding site is contributed by histidine 446. Glutamate 480 serves as a coordination point for ATP. Arginine 487 is a binding site for L-aspartate. An ATP-binding site is contributed by 532–535 (GLDR).

This sequence belongs to the class-II aminoacyl-tRNA synthetase family. Type 1 subfamily. As to quaternary structure, homodimer.

It is found in the cytoplasm. It catalyses the reaction tRNA(Asx) + L-aspartate + ATP = L-aspartyl-tRNA(Asx) + AMP + diphosphate. Aspartyl-tRNA synthetase with relaxed tRNA specificity since it is able to aspartylate not only its cognate tRNA(Asp) but also tRNA(Asn). Reaction proceeds in two steps: L-aspartate is first activated by ATP to form Asp-AMP and then transferred to the acceptor end of tRNA(Asp/Asn). The protein is Aspartate--tRNA(Asp/Asn) ligase of Streptococcus mutans serotype c (strain ATCC 700610 / UA159).